The primary structure comprises 516 residues: Protein phosphatase 1H (516 aa).

2 disordered regions span residues 102 to 122 (ADPS…PSGD) and 181 to 202 (PPTC…SGSQ). Positions 106-506 (SVSYTPSRRR…DDISVFIIPL (401 aa)) constitute a PPM-type phosphatase domain. A compositionally biased stretch (polar residues) spans 190 to 202 (PNPQLHASASGSQ).

This sequence belongs to the PP2C family.

Its subcellular location is the nucleus. The protein localises to the cytoplasm. It catalyses the reaction O-phospho-L-seryl-[protein] + H2O = L-seryl-[protein] + phosphate. The enzyme catalyses O-phospho-L-threonyl-[protein] + H2O = L-threonyl-[protein] + phosphate. This is Protein phosphatase 1H (ppm1h) from Danio rerio (Zebrafish).